We begin with the raw amino-acid sequence, 494 residues long: UDP-N-acetylmuramoyl-L-alanyl-D-glutamate--2,6-diaminopimelate ligase (494 aa).

Ser-32 contacts UDP-N-acetyl-alpha-D-muramoyl-L-alanyl-D-glutamate. Gly-112–Thr-118 is an ATP binding site. Residues Asn-153, Thr-154 to Thr-155, Ser-181, and Arg-189 contribute to the UDP-N-acetyl-alpha-D-muramoyl-L-alanyl-D-glutamate site. Lys-221 is modified (N6-carboxylysine). Meso-2,6-diaminopimelate-binding positions include Arg-383, Asp-407–Arg-410, Gly-459, and Glu-463. A Meso-diaminopimelate recognition motif motif is present at residues Asp-407–Arg-410.

It belongs to the MurCDEF family. MurE subfamily. The cofactor is Mg(2+). Carboxylation is probably crucial for Mg(2+) binding and, consequently, for the gamma-phosphate positioning of ATP.

It localises to the cytoplasm. The catalysed reaction is UDP-N-acetyl-alpha-D-muramoyl-L-alanyl-D-glutamate + meso-2,6-diaminopimelate + ATP = UDP-N-acetyl-alpha-D-muramoyl-L-alanyl-gamma-D-glutamyl-meso-2,6-diaminopimelate + ADP + phosphate + H(+). Its pathway is cell wall biogenesis; peptidoglycan biosynthesis. Its function is as follows. Catalyzes the addition of meso-diaminopimelic acid to the nucleotide precursor UDP-N-acetylmuramoyl-L-alanyl-D-glutamate (UMAG) in the biosynthesis of bacterial cell-wall peptidoglycan. The polypeptide is UDP-N-acetylmuramoyl-L-alanyl-D-glutamate--2,6-diaminopimelate ligase (Solibacter usitatus (strain Ellin6076)).